The chain runs to 241 residues: Outer membrane protein A (241 aa).

5 beta stranded membrane-spanning segments follow: residues 1–8 (LTAKLSYP), 13–21 (LDIYTRLGG), 46–55 (PVFAGGVEYA), 60–67 (IATRLEYQ), and 86–94 (MLSVGVSYR). 4 tandem repeats follow at residues 105–106 (AP), 107–108 (AP), 109–110 (AP), and 111–112 (AP). The tract at residues 105–112 (APAPAPAP) is 4 X 2 AA tandem repeats of A-P. An OmpA-like domain is found at 114-241 (VQTKHFTLKS…RRVEIEVKGV (128 aa)). A disulfide bond links Cys-215 and Cys-227.

The protein belongs to the outer membrane OOP (TC 1.B.6) superfamily. OmpA family. Monomer and homodimer.

It localises to the cell outer membrane. Its function is as follows. With TolR probably plays a role in maintaining the position of the peptidoglycan cell wall in the periplasm. Acts as a porin with low permeability that allows slow penetration of small solutes; an internal gate slows down solute passage. This is Outer membrane protein A from Shimwellia blattae (Escherichia blattae).